Reading from the N-terminus, the 319-residue chain is Cell division protein FtsN (319 aa).

The interval 1–30 (MAQRDYVRRSQPAPSRRKKSTSRKKQRNLP) is disordered. Residues 1–33 (MAQRDYVRRSQPAPSRRKKSTSRKKQRNLPAVS) lie on the Cytoplasmic side of the membrane. A mediates interaction with FtsA region spans residues 4–6 (RDY). Residues 15–27 (SRRKKSTSRKKQR) show a composition bias toward basic residues. Residues 34 to 54 (PAMVAIAAAVLVTFIGGLYFI) traverse the membrane as a helical segment. The Periplasmic segment spans residues 55–319 (THHKKEESET…TNCIRLAAGG (265 aa)). Disordered regions lie at residues 60–79 (EESETLQSQKVTGNGLPPKP) and 89–113 (LESRQPGVRAPTEPSAGGEVKTPEQ). 4 consecutive repeat copies span residues 115–120 (TPEQRQ), 145–150 (TPEQRQ), 197–200 (QSKP), and 220–223 (QSKP). Positions 115–150 (TPEQRQLLEQMQADMRQQPTQLVEVPWNEQTPEQRQ) are 2 X 6 AA repeats. Positions 140-245 (PWNEQTPEQR…PKPTAEKKDE (106 aa)) are disordered. Low complexity predominate over residues 143 to 171 (EQTPEQRQQTLQRQRQAQQLAEQQRLAQQ). The segment covering 172-221 (SRTTEQSWQQQTRTSQAAPVQAQPRQSKPASSQQPYQDLLQTPAHTTAQS) has biased composition (polar residues). A 2 X 4 AA repeats region spans residues 197–223 (QSKPASSQQPYQDLLQTPAHTTAQSKP). A compositionally biased stretch (low complexity) spans 222 to 238 (KPQQAAPVARAADAPKP). Residues 242–316 (KKDERRWMVQ…AGHTNCIRLA (75 aa)) form the SPOR domain. A disulfide bridge links cysteine 252 with cysteine 312.

The protein belongs to the FtsN family. Interacts with FtsA via its N-terminal cytoplasmic domain. Interacts with ZapA, FtsQ, FtsW and FtsI.

The protein resides in the cell inner membrane. Functionally, essential cell division protein that activates septal peptidoglycan synthesis and constriction of the cell. Acts on both sides of the membrane, via interaction with FtsA in the cytoplasm and interaction with the FtsQBL complex in the periplasm. These interactions may induce a conformational switch in both FtsA and FtsQBL, leading to septal peptidoglycan synthesis by FtsI and associated synthases. Required for full FtsI activity. Required for recruitment of AmiC to the septal ring. This is Cell division protein FtsN from Escherichia coli (strain K12).